The following is a 402-amino-acid chain: Probable 2,3-bisphosphoglycerate-independent phosphoglycerate mutase (402 aa).

The protein belongs to the BPG-independent phosphoglycerate mutase family. A-PGAM subfamily.

The catalysed reaction is (2R)-2-phosphoglycerate = (2R)-3-phosphoglycerate. It functions in the pathway carbohydrate degradation; glycolysis; pyruvate from D-glyceraldehyde 3-phosphate: step 3/5. Catalyzes the interconversion of 2-phosphoglycerate and 3-phosphoglycerate. This Thermosipho africanus (strain TCF52B) protein is Probable 2,3-bisphosphoglycerate-independent phosphoglycerate mutase.